Reading from the N-terminus, the 265-residue chain is Energy-coupling factor transporter transmembrane protein EcfT (265 aa).

A run of 5 helical transmembrane segments spans residues 32–52 (MVLL…VFII), 72–92 (LVII…GRVI), 115–135 (LIML…IALT), 150–170 (VPAH…PTLM), and 245–265 (LAAF…RFIW).

This sequence belongs to the energy-coupling factor EcfT family. Forms a stable energy-coupling factor (ECF) transporter complex composed of 2 membrane-embedded substrate-binding proteins (S component), 2 ATP-binding proteins (A component) and 2 transmembrane proteins (T component). May be able to interact with more than 1 S component at a time.

It localises to the cell membrane. Functionally, transmembrane (T) component of an energy-coupling factor (ECF) ABC-transporter complex. Unlike classic ABC transporters this ECF transporter provides the energy necessary to transport a number of different substrates. In Thermosediminibacter oceani (strain ATCC BAA-1034 / DSM 16646 / JW/IW-1228P), this protein is Energy-coupling factor transporter transmembrane protein EcfT.